We begin with the raw amino-acid sequence, 603 residues long: Bifunctional 3-dehydroquinate dehydratase/shikimate dehydrogenase, chloroplastic (603 aa).

Over residues 1–10 (MAASSTNARL) the composition is skewed to polar residues. The disordered stretch occupies residues 1–22 (MAASSTNARLTNPPRLLSKPRL). A chloroplast-targeting transit peptide spans 1-66 (MAASSTNARL…VVFSDQRRRR (66 aa)). Residues 13–22 (PPRLLSKPRL) are compositionally biased toward low complexity. The segment at 96–313 (ICAPVMADSI…QPTIKDLLDL (218 aa)) is 3-dehydroquinate dehydratase. The 3-dehydroshikimate site is built by glutamate 124, arginine 126, and arginine 155. The active-site Proton acceptor; for 3-dehydroquinate dehydratase activity is the histidine 214. Positions 241, 279, 300, and 304 each coordinate 3-dehydroshikimate. Lysine 241 acts as the Schiff-base intermediate with substrate; for 3-dehydroquinate dehydratase activity in catalysis. The tract at residues 328–558 (IIGKPVSHSK…VYTPRITRLL (231 aa)) is shikimate dehydrogenase. 6 residues coordinate shikimate: serine 336, serine 338, threonine 381, lysine 385, asparagine 406, and aspartate 423. Lysine 385 serves as the catalytic For shikimate dehydrogenase activity. The active-site For shikimate dehydrogenase activity is the aspartate 423. Positions 461, 463, 464, 483, 485, 488, 525, and 548 each coordinate NADP(+). Shikimate is bound at residue tyrosine 550. Glycine 571 contacts NADP(+). Residues glutamine 578 and glutamine 582 each coordinate shikimate.

It in the N-terminal section; belongs to the type-I 3-dehydroquinase family. The protein in the C-terminal section; belongs to the shikimate dehydrogenase family. Monomer.

Its subcellular location is the plastid. It is found in the chloroplast. The enzyme catalyses 3-dehydroquinate = 3-dehydroshikimate + H2O. The catalysed reaction is shikimate + NADP(+) = 3-dehydroshikimate + NADPH + H(+). The protein operates within metabolic intermediate biosynthesis; chorismate biosynthesis; chorismate from D-erythrose 4-phosphate and phosphoenolpyruvate: step 3/7. It participates in metabolic intermediate biosynthesis; chorismate biosynthesis; chorismate from D-erythrose 4-phosphate and phosphoenolpyruvate: step 4/7. Its function is as follows. Bifunctional dehydroquinate dehydratase-shikimate dehydrogenase enzyme that catalyzes two steps in the chorismate biosynthesis pathway. This chain is Bifunctional 3-dehydroquinate dehydratase/shikimate dehydrogenase, chloroplastic, found in Arabidopsis thaliana (Mouse-ear cress).